The sequence spans 61 residues: Metallothionein (61 aa).

An N-acetylmethionine modification is found at Met1. The beta stretch occupies residues 1-29; it reads MDPNCSCAAGGSCTCAGSCKCKECKCTSC. Cys5, Cys7, Cys13, Cys15, Cys19, Cys21, Cys24, Cys26, Cys29, Cys33, Cys34, Cys36, Cys37, Cys41, Cys44, Cys48, Cys50, Cys57, Cys59, and Cys60 together coordinate a divalent metal cation. The tract at residues 30–61 is alpha; sequence KKSCCSCCPPGCTKCAQGCVCKGASDKCNCCA.

This sequence belongs to the metallothionein superfamily. Type 1 family. Monomer.

Metallothioneins have a high content of cysteine residues that bind various heavy metals. This Balaena mysticetus (Bowhead whale) protein is Metallothionein.